Reading from the N-terminus, the 88-residue chain is Small ribosomal subunit protein uS17 (88 aa).

The protein belongs to the universal ribosomal protein uS17 family. As to quaternary structure, part of the 30S ribosomal subunit.

Functionally, one of the primary rRNA binding proteins, it binds specifically to the 5'-end of 16S ribosomal RNA. The protein is Small ribosomal subunit protein uS17 of Lactobacillus acidophilus (strain ATCC 700396 / NCK56 / N2 / NCFM).